A 375-amino-acid chain; its full sequence is MGRAISKSGPVRALGAMSGTSLDGVDVAVLETDGRDILGFGETGYRAYSDAEREVLRAALGQWTGDAVAAAARVVEAAHIEVMTDHADVDLIGFHGQTVAHAPRLQGTLQVGDGGVLAEALGRPVVWDFRSDDVSMGGEGAPLAPFFHHACARYIGATEPLCFLNLGGVGNVTYVDPRKARPEDEGALLAFDTGPANAPINDFLQSRLGLAMDEGGRIASGGAVENGALELFLAEPYFARMPPKSLDRNDFPEMIGLVTELSDADATATLTAMCAAAVAQGMEHCPKAPSKVLVTGGGRHNPVLMEMLRVSLDCPVEPVETVGLDGDMLEAQAFAYLAVRVARGLPTSAPSTTGVRACVGGGTVTVPEGWTARKT.

Residue 19–26 (GTSLDGVD) participates in ATP binding.

It belongs to the anhydro-N-acetylmuramic acid kinase family.

The catalysed reaction is 1,6-anhydro-N-acetyl-beta-muramate + ATP + H2O = N-acetyl-D-muramate 6-phosphate + ADP + H(+). It participates in amino-sugar metabolism; 1,6-anhydro-N-acetylmuramate degradation. Its pathway is cell wall biogenesis; peptidoglycan recycling. Functionally, catalyzes the specific phosphorylation of 1,6-anhydro-N-acetylmuramic acid (anhMurNAc) with the simultaneous cleavage of the 1,6-anhydro ring, generating MurNAc-6-P. Is required for the utilization of anhMurNAc either imported from the medium or derived from its own cell wall murein, and thus plays a role in cell wall recycling. The chain is Anhydro-N-acetylmuramic acid kinase from Ruegeria sp. (strain TM1040) (Silicibacter sp.).